Consider the following 702-residue polypeptide: Lipase maturation factor 2 (702 aa).

Helical transmembrane passes span 10–30 (LFLQ…YTQI), 75–95 (AQGL…ALLL), 164–184 (DLPF…SGVV), 226–246 (LSVV…FAPI), 259–279 (LLQV…LTLV), 316–336 (LLLE…YFGL), 363–383 (VTLP…LVVL), and 398–418 (AGIQ…ISLV). N-linked (GlcNAc...) asparagine glycosylation is present at asparagine 488. A helical membrane pass occupies residues 636 to 656 (ILLWGLFGAVVAIRVVQTLLA). A disordered region spans residues 660-702 (LQSSKQTREEKRKQTSKKDSRAASEQAAANSNSRDSWAPRRKK). Basic and acidic residues predominate over residues 665–681 (QTREEKRKQTSKKDSRA). Residues 682 to 693 (ASEQAAANSNSR) are compositionally biased toward low complexity.

The protein belongs to the lipase maturation factor family.

It localises to the endoplasmic reticulum membrane. Functionally, involved in the maturation of specific proteins in the endoplasmic reticulum. May be required for maturation and transport of active lipoprotein lipase (LPL) through the secretory pathway. This chain is Lipase maturation factor 2 (Lmf2), found in Mus musculus (Mouse).